The following is a 54-amino-acid chain: Potassium channel toxin alpha-KTx 14.2 (54 aa).

An N-terminal signal peptide occupies residues 1–23 (MKIFFAILLILAVCSMAIWTVNG). Cystine bridges form between Cys30/Cys46, Cys36/Cys51, and Cys40/Cys53.

The protein belongs to the short scorpion toxin superfamily. Potassium channel inhibitor family. Alpha-KTx 14 subfamily. As to expression, expressed by the venom gland.

The protein localises to the secreted. Its function is as follows. Inhibits potassium channels. May be active towards small conductance calcium-activated potassium channels (KCNN, SK), and less active towards voltage-gated potassium channels (Kv/KCN). The chain is Potassium channel toxin alpha-KTx 14.2 from Olivierus martensii (Manchurian scorpion).